Here is an 843-residue protein sequence, read N- to C-terminus: OTU domain-containing protein 7B (843 aa).

Residues 50 to 88 (GNLPPSFSEGSGGSRTPEKGFSDREPTRPPRPILQRQDD) are disordered. Residues 65 to 77 (TPEKGFSDREPTR) show a composition bias toward basic and acidic residues. Ser100 is subject to Phosphoserine. Residues 152 to 401 (ERDLIEQSML…AVDPGKGWEW (250 aa)) form a TRAF-binding region. The segment at 167-440 (AGRLNWWVSV…VKWIPLSSDA (274 aa)) is catalytic. The region spanning 183–365 (LLPLATTGDG…QAHFSALVSM (183 aa)) is the OTU domain. Positions 187 to 193 (ATTGDGN) are regulatory loop. Asp191 is a catalytic residue. Catalysis depends on Cys194, which acts as the Nucleophile. His358 serves as the catalytic Proton acceptor. Disordered regions lie at residues 442-587 (APLA…GGSK) and 652-711 (IMNG…CQEP). Basic and acidic residues-rich tracts occupy residues 456–471 (DEPR…DKES) and 488–500 (SKRD…KRAD). Phosphoserine occurs at positions 464, 467, and 471. A Nuclear localization signal motif is present at residues 483–498 (RRKEKSKRDREKDKKR). Positions 531–543 (KPGGVGTGLGGSS) are enriched in gly residues. A compositionally biased stretch (basic and acidic residues) spans 665–675 (KKPEPDAREEQ). Thr729 carries the post-translational modification Phosphothreonine. Residues 732-792 (RQCPPGRPYP…PEPDGWAGGL (61 aa)) form a disordered region. The A20-type zinc finger occupies 796–831 (PPTQTKCKQPNCSFYGHPETNNFCSCCYREELRRRE). Positions 802, 807, 819, and 822 each coordinate Zn(2+).

It belongs to the peptidase C64 family. In terms of assembly, interacts with ZAP70 in activated T cells, but not in resting T cells. Interacts with TRAF3. Interacts with TRAF6. Interacts with PARK7, leading to inhibit deubiquitinase activity. Interacts with EGFR, ITCH and NEDD4. In terms of processing, phosphorylated by EGFR. In terms of tissue distribution, widely expressed. Abundant in kidney, heart and fetal liver. Expressed differentially among B-cells at distinct developmental stages. Higher expression seen in primary immature B-cells as compared to the mature cells.

It localises to the cytoplasm. It is found in the nucleus. It catalyses the reaction Thiol-dependent hydrolysis of ester, thioester, amide, peptide and isopeptide bonds formed by the C-terminal Gly of ubiquitin (a 76-residue protein attached to proteins as an intracellular targeting signal).. Its activity is regulated as follows. Deubiquitinase activity is inhibited following interaction with PARK7. In terms of biological role, negative regulator of the non-canonical NF-kappa-B pathway that acts by mediating deubiquitination of TRAF3, an inhibitor of the NF-kappa-B pathway, thereby acting as a negative regulator of B-cell responses. In response to non-canonical NF-kappa-B stimuli, deubiquitinates 'Lys-48'-linked polyubiquitin chains of TRAF3, preventing TRAF3 proteolysis and over-activation of non-canonical NF-kappa-B. Negatively regulates mucosal immunity against infections. Deubiquitinates ZAP70, and thereby regulates T cell receptor (TCR) signaling that leads to the activation of NF-kappa-B. Plays a role in T cell homeostasis and is required for normal T cell responses, including production of IFNG and IL2. Mediates deubiquitination of EGFR. Has deubiquitinating activity toward 'Lys-11', 'Lys-48' and 'Lys-63'-linked polyubiquitin chains. Has a much higher catalytic rate with 'Lys-11'-linked polyubiquitin chains (in vitro); however the physiological significance of these data are unsure. Hydrolyzes both linear and branched forms of polyubiquitin. Acts as a regulator of mTORC1 and mTORC2 assembly by mediating 'Lys-63'-linked deubiquitination of MLST8, thereby promoting assembly of the mTORC2 complex, while inibiting formation of the mTORC1 complex. This is OTU domain-containing protein 7B (OTUD7B) from Homo sapiens (Human).